Reading from the N-terminus, the 370-residue chain is tRNA-specific 2-thiouridylase MnmA (370 aa).

ATP is bound by residues 11–18 and Met37; that span reads GMSGGVDS. The interaction with target base in tRNA stretch occupies residues 97-99; that stretch reads NPD. The Nucleophile role is filled by Cys102. Cys102 and Cys199 are oxidised to a cystine. Gly126 provides a ligand contact to ATP. The segment at 149-151 is interaction with tRNA; it reads KDQ. Cys199 (cysteine persulfide intermediate) is an active-site residue. Positions 307-308 are interaction with tRNA; it reads RY.

It belongs to the MnmA/TRMU family.

It localises to the cytoplasm. It carries out the reaction S-sulfanyl-L-cysteinyl-[protein] + uridine(34) in tRNA + AH2 + ATP = 2-thiouridine(34) in tRNA + L-cysteinyl-[protein] + A + AMP + diphosphate + H(+). Its function is as follows. Catalyzes the 2-thiolation of uridine at the wobble position (U34) of tRNA, leading to the formation of s(2)U34. The polypeptide is tRNA-specific 2-thiouridylase MnmA (Staphylococcus carnosus (strain TM300)).